The chain runs to 94 residues: Small ribosomal subunit protein uS19 (94 aa).

It belongs to the universal ribosomal protein uS19 family.

Protein S19 forms a complex with S13 that binds strongly to the 16S ribosomal RNA. The sequence is that of Small ribosomal subunit protein uS19 from Elusimicrobium minutum (strain Pei191).